Reading from the N-terminus, the 913-residue chain is Probable TonB-dependent receptor HI_1217 (913 aa).

The N-terminal stretch at 1–27 is a signal peptide; the sequence is MKKAIKLNLITLGLINTIGMTITQAQA. One can recognise a TBDR plug domain in the interval 42–165; that stretch reads SNDKKPFTEA…LAGSANFRTL (124 aa). A TBDR beta-barrel domain is found at 176–913; the sequence is PFGIILKGMT…TYILSLNYKF (738 aa). A TonB C-terminal box motif is present at residues 896–913; sequence LYNFARGRTYILSLNYKF.

Belongs to the TonB-dependent receptor family.

Its subcellular location is the cell outer membrane. Functionally, probable receptor, TonB-dependent. The sequence is that of Probable TonB-dependent receptor HI_1217 from Haemophilus influenzae (strain ATCC 51907 / DSM 11121 / KW20 / Rd).